The chain runs to 569 residues: Urease subunit alpha (569 aa).

Residues 131-569 (GGIDTHIHFI…LPLAQRYLLL (439 aa)) form the Urease domain. Residues histidine 136, histidine 138, and lysine 219 each contribute to the Ni(2+) site. Lysine 219 carries the post-translational modification N6-carboxylysine. Residue histidine 221 participates in substrate binding. Ni(2+)-binding residues include histidine 248 and histidine 274. Catalysis depends on histidine 322, which acts as the Proton donor. Aspartate 362 is a binding site for Ni(2+).

The protein belongs to the metallo-dependent hydrolases superfamily. Urease alpha subunit family. As to quaternary structure, heterotrimer of UreA (gamma), UreB (beta) and UreC (alpha) subunits. Three heterotrimers associate to form the active enzyme. The cofactor is Ni cation. In terms of processing, carboxylation allows a single lysine to coordinate two nickel ions.

Its subcellular location is the cytoplasm. The enzyme catalyses urea + 2 H2O + H(+) = hydrogencarbonate + 2 NH4(+). It functions in the pathway nitrogen metabolism; urea degradation; CO(2) and NH(3) from urea (urease route): step 1/1. The polypeptide is Urease subunit alpha (Synechococcus sp. (strain CC9311)).